A 925-amino-acid chain; its full sequence is Translation initiation factor IF-2 (925 aa).

The tract at residues 190-329 (PAAPTSEAAP…RRRDEREAAV (140 aa)) is disordered. Composition is skewed to pro residues over residues 199–209 (PPEPEPTPLPA), 217–238 (PVRPPAPPAPAKPTPAPAPAPR), and 279–288 (RPVPAQPAPQ). Positions 289-307 (TPTRSGSGIAKKGAITKAG) are enriched in low complexity. The span at 320-329 (RRRDEREAAV) shows a compositional bias: basic and acidic residues. A tr-type G domain is found at 417–589 (VRPPVVTIMG…LLLVADYELE (173 aa)). The G1 stretch occupies residues 426–433 (GHVDHGKT). Residue 426–433 (GHVDHGKT) coordinates GTP. Residues 451-455 (GITQH) form a G2 region. The interval 476–479 (DTPG) is G3. Residues 476 to 480 (DTPGH) and 530 to 533 (NKVD) each bind GTP. Residues 530-533 (NKVD) form a G4 region. Residues 566 to 568 (SAK) form a G5 region.

Belongs to the TRAFAC class translation factor GTPase superfamily. Classic translation factor GTPase family. IF-2 subfamily.

The protein resides in the cytoplasm. In terms of biological role, one of the essential components for the initiation of protein synthesis. Protects formylmethionyl-tRNA from spontaneous hydrolysis and promotes its binding to the 30S ribosomal subunits. Also involved in the hydrolysis of GTP during the formation of the 70S ribosomal complex. The polypeptide is Translation initiation factor IF-2 (Gloeobacter violaceus (strain ATCC 29082 / PCC 7421)).